A 485-amino-acid chain; its full sequence is Transcription factor ETV6 (485 aa).

Over residues 1–10 the composition is skewed to polar residues; it reads MSETPAQSSI. The segment at 1–32 is disordered; that stretch reads MSETPAQSSIKQERISYTPPESPVASHRSSTP. At lysine 11 the chain carries N6-acetyllysine; alternate. A Glycyl lysine isopeptide (Lys-Gly) (interchain with G-Cter in SUMO2); alternate cross-link involves residue lysine 11. Threonine 18 bears the Phosphothreonine mark. Serine 22 is subject to Phosphoserine. The PNT domain maps to 41–125; that stretch reads ALRMEEDSIH…ELLQHILKQR (85 aa). Residues 157 to 210 form a disordered region; that stretch reads NCVQRTPRTPAESVHHNPPTIELLHRPRSPITTNHRPSPDPEQQRPQRSPLDNM. Residue threonine 165 is modified to Phosphothreonine. Residues serine 215, serine 240, and serine 251 each carry the phosphoserine modification. A Glycyl lysine isopeptide (Lys-Gly) (interchain with G-Cter in SUMO2) cross-link involves residue lysine 284. Lysine 298 bears the N6-acetyllysine; alternate mark. Lysine 298 participates in a covalent cross-link: Glycyl lysine isopeptide (Lys-Gly) (interchain with G-Cter in SUMO2); alternate. Residue serine 319 is modified to Phosphoserine. A DNA-binding region (ETS) is located at residues 335-416; that stretch reads RLLWDYVYQL…PGQRLLFRFM (82 aa). Glycyl lysine isopeptide (Lys-Gly) (interchain with G-Cter in SUMO2) cross-links involve residues lysine 399 and lysine 417. The interval 440-485 is disordered; the sequence is EQTYQEDEPTIASPVGWPRGNLPTGTAGGVMEAGELGVAVKEETRE.

Belongs to the ETS family. Can form homodimers or heterodimers with TEL2 or FLI1. Interacts with L3MBTL1 and HDAC9.

The protein localises to the nucleus. Functionally, transcriptional repressor; binds to the DNA sequence 5'-CCGGAAGT-3'. Plays a role in hematopoiesis and malignant transformation. The chain is Transcription factor ETV6 (Etv6) from Mus musculus (Mouse).